Here is a 375-residue protein sequence, read N- to C-terminus: Dehydrodolichyl diphosphate synthase complex subunit NUS1 (375 aa).

Basic and acidic residues predominate over residues 1–28 (MPTMIKKDDKAMEPPNEKPHRKIERDDV). The interval 1–48 (MPTMIKKDDKAMEPPNEKPHRKIERDDVPESSNHIPPPESGVLKGGKV) is disordered. A helical transmembrane segment spans residues 97 to 119 (YLFYKFLLVLLYICFGLFRYGQY).

It belongs to the UPP synthase family. In terms of assembly, forms an active dehydrodolichyl diphosphate synthase complex with either SRT1 or RER2. Mg(2+) serves as cofactor.

It localises to the endoplasmic reticulum membrane. The protein localises to the lipid droplet. It is found in the nucleus membrane. The enzyme catalyses n isopentenyl diphosphate + (2E,6E)-farnesyl diphosphate = a di-trans,poly-cis-polyprenyl diphosphate + n diphosphate. The protein operates within protein modification; protein glycosylation. Functionally, with SRT1 or RER2, forms the dehydrodolichyl diphosphate synthase (DDS) complex, an essential component of the dolichol monophosphate (Dol-P) biosynthetic machinery. Adds multiple copies of isopentenyl pyrophosphate (IPP) to farnesyl pyrophosphate (FPP) to produce dehydrodolichyl diphosphate (Dedol-PP), a precursor of dolichol which is utilized as a sugar carrier in protein glycosylation in the endoplasmic reticulum (ER). The chain is Dehydrodolichyl diphosphate synthase complex subunit NUS1 (NUS1) from Saccharomyces cerevisiae (strain ATCC 204508 / S288c) (Baker's yeast).